Reading from the N-terminus, the 74-residue chain is U3-agatoxin-Ao1g (74 aa).

The first 20 residues, 1-20, serve as a signal peptide directing secretion; that stretch reads MRAIISLLLISTMVFGVIEA. Positions 21 to 34 are excised as a propeptide; it reads VSVEEGLKIFEGER. Disulfide bonds link cysteine 37–cysteine 53, cysteine 44–cysteine 58, cysteine 52–cysteine 68, and cysteine 60–cysteine 66. Asparagine 72 bears the Asparagine amide mark.

It belongs to the neurotoxin 07 (Beta/delta-agtx) family. 03 (aga-4) subfamily. Aga sub-subfamily. As to expression, expressed by the venom gland.

It localises to the secreted. In terms of biological role, insecticidal neurotoxin that modulates the insect Nav channel (DmNaV1/tipE (para/tipE)) in a unique manner, with both the activation and inactivation processes being affected. The voltage dependence of activation is shifted toward more hyperpolarized potentials (analogous to site 4 toxins) and a non-inactivating persistent sodium current is induced (site 3-like action). Interestingly, both effects take place in a voltage-dependent manner, producing a bell-shaped curve between -80 and 0 mV. In Agelena orientalis (Funnel-web spider), this protein is U3-agatoxin-Ao1g.